Here is a 170-residue protein sequence, read N- to C-terminus: Ribosome maturation factor RimM (170 aa).

The region spanning 98 to 170 (PDEYYWVDLE…LIVVDWDPDF (73 aa)) is the PRC barrel domain.

Belongs to the RimM family. In terms of assembly, binds ribosomal protein uS19.

It localises to the cytoplasm. Functionally, an accessory protein needed during the final step in the assembly of 30S ribosomal subunit, possibly for assembly of the head region. Essential for efficient processing of 16S rRNA. May be needed both before and after RbfA during the maturation of 16S rRNA. It has affinity for free ribosomal 30S subunits but not for 70S ribosomes. The chain is Ribosome maturation factor RimM from Xanthomonas axonopodis pv. citri (strain 306).